The following is a 350-amino-acid chain: NADH-quinone oxidoreductase subunit H (350 aa).

8 helical membrane-spanning segments follow: residues 31-51, 102-122, 132-152, 171-191, 205-225, 263-283, 286-306, and 322-342; these read LMLL…LFLI, LLAP…IPFG, LGVL…WMAG, MLSY…MAGS, WFIF…NAEF, FMIG…APFG, FIPS…LYMW, and FAWK…GFGL.

Belongs to the complex I subunit 1 family. As to quaternary structure, NDH-1 is composed of 14 different subunits. Subunits NuoA, H, J, K, L, M, N constitute the membrane sector of the complex.

Its subcellular location is the cell membrane. It carries out the reaction a quinone + NADH + 5 H(+)(in) = a quinol + NAD(+) + 4 H(+)(out). NDH-1 shuttles electrons from NADH, via FMN and iron-sulfur (Fe-S) centers, to quinones in the respiratory chain. The immediate electron acceptor for the enzyme in this species is believed to be ubiquinone. Couples the redox reaction to proton translocation (for every two electrons transferred, four hydrogen ions are translocated across the cytoplasmic membrane), and thus conserves the redox energy in a proton gradient. This subunit may bind ubiquinone. This is NADH-quinone oxidoreductase subunit H from Carboxydothermus hydrogenoformans (strain ATCC BAA-161 / DSM 6008 / Z-2901).